Consider the following 301-residue polypeptide: Prohibitin-2 (301 aa).

2 necessary for transcriptional repression regions span residues 19–49 and 150–174; these read VGTA…GQRA and ASQL…RAKD. Residues 190–237 adopt a coiled-coil conformation; sequence SREYTAAVEAKQVAQQEAQRAQFLVEKAKQEQKQKIVQAEGEATAAKM.

Belongs to the prohibitin family. In terms of assembly, the mitochondrial prohibitin complex consists of two subunits (PHB1 and PHB2), assembled into a membrane-associated ring-shaped supercomplex of approximately 1 mDa.

It localises to the mitochondrion inner membrane. Its subcellular location is the cytoplasm. The protein resides in the nucleus. The protein localises to the cell membrane. Functionally, protein with pleiotropic attributes mediated in a cell-compartment- and tissue-specific manner, which include the plasma membrane-associated cell signaling functions, mitochondrial chaperone, and transcriptional co-regulator of transcription factors and sex steroid hormones in the nucleus. In the mitochondria, together with PHB, forms large ring complexes (prohibitin complexes) in the inner mitochondrial membrane (IMM) and functions as a chaperone protein that stabilizes mitochondrial respiratory enzymes and maintains mitochondrial integrity in the IMM, which is required for mitochondrial morphogenesis, neuronal survival, and normal lifespan. In terms of biological role, in the nucleus, serves as transcriptional co-regulator. The polypeptide is Prohibitin-2 (PHB2) (Gallus gallus (Chicken)).